We begin with the raw amino-acid sequence, 222 residues long: MSHLVKMENGQSQTIQEMLGCIERYNPDHLKILESYVQDQAKNNSYDLEANLAVLKLYQFNPHMLNFDITYTILLKSLTNLPHTDFVMAKCLLLPQQMKDENVQTIIDLADILERADFTLFWQRAEVNRTMFRHIAGFHDSIRKFVSHVVGTTFQTIKKDLLKELLGGIEDSTLESWIKRNGWKHQGHDLVVVATQDDKIKTKNITEKIEFENVGALMAQCL.

The region spanning 46–208 (YDLEANLAVL…KIKTKNITEK (163 aa)) is the PCI domain.

The protein belongs to the eIF-3 subunit K family. Component of the eukaryotic translation initiation factor 3 (eIF-3) complex. The eIF-3 complex interacts with pix.

Its subcellular location is the cytoplasm. In terms of biological role, component of the eukaryotic translation initiation factor 3 (eIF-3) complex, which is involved in protein synthesis of a specialized repertoire of mRNAs and, together with other initiation factors, stimulates binding of mRNA and methionyl-tRNAi to the 40S ribosome. The eIF-3 complex specifically targets and initiates translation of a subset of mRNAs involved in cell proliferation. The protein is Eukaryotic translation initiation factor 3 subunit K of Drosophila grimshawi (Hawaiian fruit fly).